We begin with the raw amino-acid sequence, 150 residues long: MKRVRVKVIFVSFGLLVVFLSLSGTAADCPSSWSSYEGHCYKPFNEGKNWADAENFCTQQHTGGHLVSFHSTEEADFVVKLAFQTFGHSIFWIGLSNVWNKCSWQWSNGAMLKYEDWAEESYCVYFKSTNNKWRSRACRMLARFVCEFQA.

Positions 1–27 are cleaved as a signal peptide; that stretch reads MKRVRVKVIFVSFGLLVVFLSLSGTAA. Disulfide bonds link cysteine 29/cysteine 40, cysteine 57/cysteine 146, and cysteine 123/cysteine 138. Residues 36-147 form the C-type lectin domain; the sequence is YEGHCYKPFN…CRMLARFVCE (112 aa).

Belongs to the snaclec family. In terms of assembly, heteromultimer; disulfide-linked. In terms of tissue distribution, expressed by the venom gland.

Its subcellular location is the secreted. Functionally, interferes with one step of hemostasis (modulation of platelet aggregation, or coagulation cascade, for example). The protein is C-type lectin 16 of Crotalus adamanteus (Eastern diamondback rattlesnake).